The chain runs to 353 residues: Draxin-B (353 aa).

The N-terminal stretch at 1–21 (MASSWCLPLALLVSNLAVSHS) is a signal peptide. Disordered stretches follow at residues 23-183 (EPSS…KEGS), 198-222 (TVMS…RGKV), and 246-268 (VDAW…SGNV). A compositionally biased stretch (basic residues) spans 138–167 (GPHKGKAQGHGHHFDHRRHGGRRDKGRHTK). Residues 252 to 261 (SRKKDKRRSK) are compositionally biased toward basic residues. N-linked (GlcNAc...) asparagine glycosylation is found at asparagine 262 and asparagine 267.

Belongs to the draxin family.

It localises to the secreted. Functionally, chemorepulsive axon guidance protein required for the development of spinal cord and forebrain commissures. Acts as a chemorepulsive guidance protein for commissural axons during development. Able to inhibit or repel neurite outgrowth from dorsal spinal cord. This Salmo salar (Atlantic salmon) protein is Draxin-B (draxin-B).